Consider the following 416-residue polypeptide: Adenosylhomocysteinase (416 aa).

Substrate-binding residues include Thr-55, Asp-126, and Glu-151. 152–154 (TTT) serves as a coordination point for NAD(+). Residues Lys-181 and Asp-185 each contribute to the substrate site. NAD(+) is bound by residues Asn-186, 215–220 (GYGWVG), Glu-238, Asn-273, 294–296 (AGH), and Asn-341.

Belongs to the adenosylhomocysteinase family. The cofactor is NAD(+).

Its subcellular location is the cytoplasm. It carries out the reaction S-adenosyl-L-homocysteine + H2O = L-homocysteine + adenosine. The protein operates within amino-acid biosynthesis; L-homocysteine biosynthesis; L-homocysteine from S-adenosyl-L-homocysteine: step 1/1. May play a key role in the regulation of the intracellular concentration of adenosylhomocysteine. The polypeptide is Adenosylhomocysteinase (Aeropyrum pernix (strain ATCC 700893 / DSM 11879 / JCM 9820 / NBRC 100138 / K1)).